The primary structure comprises 265 residues: Undecaprenyl-diphosphatase 1 (265 aa).

Helical transmembrane passes span isoleucine 4 to serine 24, alanine 42 to histidine 62, phenylalanine 84 to isoleucine 104, leucine 108 to alanine 128, serine 184 to leucine 204, methionine 217 to leucine 237, and leucine 245 to leucine 265.

Belongs to the UppP family.

It is found in the cell membrane. The enzyme catalyses di-trans,octa-cis-undecaprenyl diphosphate + H2O = di-trans,octa-cis-undecaprenyl phosphate + phosphate + H(+). Catalyzes the dephosphorylation of undecaprenyl diphosphate (UPP). Confers resistance to bacitracin. The polypeptide is Undecaprenyl-diphosphatase 1 (Bacillus thuringiensis (strain Al Hakam)).